A 906-amino-acid chain; its full sequence is Formin-like protein 18 (906 aa).

An N-terminal signal peptide occupies residues 1–25; the sequence is MSKLRWLIMAFLVCLLLLTPKDLEG. A helical transmembrane segment spans residues 120 to 140; the sequence is MVVVGLSAACVALVTLVGICF. Disordered regions lie at residues 267–416 and 854–906; these read AGGG…QADP and NAKA…DSDD. Residues 274 to 292 are compositionally biased toward pro residues; the sequence is AAPPPPAGPPPPAPPPLPP. Residues 293–303 are compositionally biased toward basic residues; the sequence is SHHHHHGHHPP. Composition is skewed to pro residues over residues 320–339, 348–375, and 383–402; these read APPP…PAPS, GPPP…PPPG, and GPPP…PPFK. Composition is skewed to low complexity over residues 403 to 416 and 854 to 877; these read KSPG…QADP and NAKA…QSSF. Residues 411-866 enclose the FH2 domain; that stretch reads AAQADPNKAK…AKKQQQPTPA (456 aa). A compositionally biased stretch (basic and acidic residues) spans 878–889; sequence RDPRQQIQDRRA. Low complexity predominate over residues 897 to 906; that stretch reads SSSSSSDSDD.

This sequence belongs to the formin-like family. Class-I subfamily.

It is found in the membrane. In Oryza sativa subsp. japonica (Rice), this protein is Formin-like protein 18 (FH18).